The following is a 332-amino-acid chain: 5-dehydro-2-deoxygluconokinase 1 (332 aa).

It belongs to the carbohydrate kinase PfkB family.

The catalysed reaction is 5-dehydro-2-deoxy-D-gluconate + ATP = 6-phospho-5-dehydro-2-deoxy-D-gluconate + ADP + H(+). It functions in the pathway polyol metabolism; myo-inositol degradation into acetyl-CoA; acetyl-CoA from myo-inositol: step 5/7. Its function is as follows. Catalyzes the phosphorylation of 5-dehydro-2-deoxy-D-gluconate (2-deoxy-5-keto-D-gluconate or DKG) to 6-phospho-5-dehydro-2-deoxy-D-gluconate (DKGP). The chain is 5-dehydro-2-deoxygluconokinase 1 from Bacillus cereus (strain ZK / E33L).